The chain runs to 395 residues: ATP phosphoribosyltransferase regulatory subunit (395 aa).

This sequence belongs to the class-II aminoacyl-tRNA synthetase family. HisZ subfamily. As to quaternary structure, heteromultimer composed of HisG and HisZ subunits.

It is found in the cytoplasm. The protein operates within amino-acid biosynthesis; L-histidine biosynthesis; L-histidine from 5-phospho-alpha-D-ribose 1-diphosphate: step 1/9. Its function is as follows. Required for the first step of histidine biosynthesis. May allow the feedback regulation of ATP phosphoribosyltransferase activity by histidine. This chain is ATP phosphoribosyltransferase regulatory subunit, found in Pseudomonas savastanoi pv. phaseolicola (strain 1448A / Race 6) (Pseudomonas syringae pv. phaseolicola (strain 1448A / Race 6)).